Reading from the N-terminus, the 326-residue chain is Acetyl-coenzyme A carboxylase carboxyl transferase subunit alpha (326 aa).

One can recognise a CoA carboxyltransferase C-terminal domain in the interval 44–298 (KLETRAMQLR…KQALLDNLDE (255 aa)).

This sequence belongs to the AccA family. In terms of assembly, acetyl-CoA carboxylase is a heterohexamer composed of biotin carboxyl carrier protein (AccB), biotin carboxylase (AccC) and two subunits each of ACCase subunit alpha (AccA) and ACCase subunit beta (AccD).

The protein localises to the cytoplasm. The catalysed reaction is N(6)-carboxybiotinyl-L-lysyl-[protein] + acetyl-CoA = N(6)-biotinyl-L-lysyl-[protein] + malonyl-CoA. Its pathway is lipid metabolism; malonyl-CoA biosynthesis; malonyl-CoA from acetyl-CoA: step 1/1. Functionally, component of the acetyl coenzyme A carboxylase (ACC) complex. First, biotin carboxylase catalyzes the carboxylation of biotin on its carrier protein (BCCP) and then the CO(2) group is transferred by the carboxyltransferase to acetyl-CoA to form malonyl-CoA. The polypeptide is Acetyl-coenzyme A carboxylase carboxyl transferase subunit alpha (Trichormus variabilis (strain ATCC 29413 / PCC 7937) (Anabaena variabilis)).